The primary structure comprises 453 residues: Bifunctional protein GlmU (453 aa).

Residues 1–226 (MTLDVVILAA…ALEVEGVNNR (226 aa)) are pyrophosphorylase. Residues 8–11 (LAAG), Lys22, Gln73, 78–79 (GT), 99–101 (YGD), Gly136, Glu151, Asn166, and Asn224 each bind UDP-N-acetyl-alpha-D-glucosamine. Asp101 serves as a coordination point for Mg(2+). Asn224 is a Mg(2+) binding site. The tract at residues 227 to 247 (SQMAALERAYQRDRAERLLTE) is linker. The interval 248-453 (GVALADPARF…AGWKRPRKSS (206 aa)) is N-acetyltransferase. Residues Arg330 and Lys348 each coordinate UDP-N-acetyl-alpha-D-glucosamine. Residue His360 is the Proton acceptor of the active site. The UDP-N-acetyl-alpha-D-glucosamine site is built by Tyr363 and Asn374. Acetyl-CoA-binding positions include Ala377, 383–384 (NY), Ser402, Ala420, and Arg437.

In the N-terminal section; belongs to the N-acetylglucosamine-1-phosphate uridyltransferase family. It in the C-terminal section; belongs to the transferase hexapeptide repeat family. In terms of assembly, homotrimer. It depends on Mg(2+) as a cofactor.

The protein localises to the cytoplasm. The catalysed reaction is alpha-D-glucosamine 1-phosphate + acetyl-CoA = N-acetyl-alpha-D-glucosamine 1-phosphate + CoA + H(+). The enzyme catalyses N-acetyl-alpha-D-glucosamine 1-phosphate + UTP + H(+) = UDP-N-acetyl-alpha-D-glucosamine + diphosphate. The protein operates within nucleotide-sugar biosynthesis; UDP-N-acetyl-alpha-D-glucosamine biosynthesis; N-acetyl-alpha-D-glucosamine 1-phosphate from alpha-D-glucosamine 6-phosphate (route II): step 2/2. Its pathway is nucleotide-sugar biosynthesis; UDP-N-acetyl-alpha-D-glucosamine biosynthesis; UDP-N-acetyl-alpha-D-glucosamine from N-acetyl-alpha-D-glucosamine 1-phosphate: step 1/1. It participates in bacterial outer membrane biogenesis; LPS lipid A biosynthesis. Functionally, catalyzes the last two sequential reactions in the de novo biosynthetic pathway for UDP-N-acetylglucosamine (UDP-GlcNAc). The C-terminal domain catalyzes the transfer of acetyl group from acetyl coenzyme A to glucosamine-1-phosphate (GlcN-1-P) to produce N-acetylglucosamine-1-phosphate (GlcNAc-1-P), which is converted into UDP-GlcNAc by the transfer of uridine 5-monophosphate (from uridine 5-triphosphate), a reaction catalyzed by the N-terminal domain. In Chromohalobacter salexigens (strain ATCC BAA-138 / DSM 3043 / CIP 106854 / NCIMB 13768 / 1H11), this protein is Bifunctional protein GlmU.